The following is a 416-amino-acid chain: Glutamyl-tRNA reductase (416 aa).

Substrate is bound by residues 49–52 (TCNR), serine 105, 110–112 (EPQ), and glutamine 116. The active-site Nucleophile is the cysteine 50. 185 to 190 (GAGETI) provides a ligand contact to NADP(+).

It belongs to the glutamyl-tRNA reductase family. Homodimer.

It carries out the reaction (S)-4-amino-5-oxopentanoate + tRNA(Glu) + NADP(+) = L-glutamyl-tRNA(Glu) + NADPH + H(+). It functions in the pathway porphyrin-containing compound metabolism; protoporphyrin-IX biosynthesis; 5-aminolevulinate from L-glutamyl-tRNA(Glu): step 1/2. Its function is as follows. Catalyzes the NADPH-dependent reduction of glutamyl-tRNA(Glu) to glutamate 1-semialdehyde (GSA). The sequence is that of Glutamyl-tRNA reductase from Shewanella loihica (strain ATCC BAA-1088 / PV-4).